The following is a 142-amino-acid chain: Protein SprT-like (142 aa).

The 135-residue stretch at Y4–L138 folds into the SprT-like domain. H62 is a Zn(2+) binding site. Residue E63 is part of the active site. H66 is a Zn(2+) binding site.

This sequence belongs to the SprT family. Requires Zn(2+) as cofactor.

Its subcellular location is the cytoplasm. This Streptococcus agalactiae serotype Ia (strain ATCC 27591 / A909 / CDC SS700) protein is Protein SprT-like.